Consider the following 383-residue polypeptide: Gamma-butyrobetaine dioxygenase (383 aa).

Zn(2+)-binding residues include Cys46, Cys48, Cys51, and His91. Fe cation is bound by residues His209, Asp211, and His350.

It belongs to the gamma-BBH/TMLD family. Homodimer. It depends on Fe(2+) as a cofactor. L-ascorbate serves as cofactor.

It is found in the cytoplasm. It carries out the reaction 4-(trimethylamino)butanoate + 2-oxoglutarate + O2 = carnitine + succinate + CO2. Its pathway is amine and polyamine biosynthesis; carnitine biosynthesis. In terms of biological role, catalyzes the formation of L-carnitine from gamma-butyrobetaine. In Pseudomonas sp. (strain AK-1), this protein is Gamma-butyrobetaine dioxygenase.